A 398-amino-acid chain; its full sequence is Argininosuccinate synthase (398 aa).

10–18 is an ATP binding site; that stretch reads AYSGGLDTS. L-citrulline is bound at residue Tyr-87. Gly-117 lines the ATP pocket. The L-aspartate site is built by Thr-119, Asn-123, and Asp-124. Position 123 (Asn-123) interacts with L-citrulline. 4 residues coordinate L-citrulline: Arg-127, Ser-175, Glu-260, and Tyr-272.

The protein belongs to the argininosuccinate synthase family. Type 1 subfamily. In terms of assembly, homotetramer.

The protein localises to the cytoplasm. It carries out the reaction L-citrulline + L-aspartate + ATP = 2-(N(omega)-L-arginino)succinate + AMP + diphosphate + H(+). It participates in amino-acid biosynthesis; L-arginine biosynthesis; L-arginine from L-ornithine and carbamoyl phosphate: step 2/3. The polypeptide is Argininosuccinate synthase (Lactococcus lactis subsp. lactis (strain IL1403) (Streptococcus lactis)).